Reading from the N-terminus, the 207-residue chain is dTTP/UTP pyrophosphatase (207 aa).

The Proton acceptor role is filled by D80.

The protein belongs to the Maf family. YhdE subfamily. It depends on a divalent metal cation as a cofactor.

It localises to the cytoplasm. It catalyses the reaction dTTP + H2O = dTMP + diphosphate + H(+). The catalysed reaction is UTP + H2O = UMP + diphosphate + H(+). Nucleoside triphosphate pyrophosphatase that hydrolyzes dTTP and UTP. May have a dual role in cell division arrest and in preventing the incorporation of modified nucleotides into cellular nucleic acids. In Agrobacterium fabrum (strain C58 / ATCC 33970) (Agrobacterium tumefaciens (strain C58)), this protein is dTTP/UTP pyrophosphatase (maf1).